The primary structure comprises 1254 residues: Juxtamembrane domain-associated catenin (1254 aa).

Disordered stretches follow at residues 1 to 38 (MISS…TMRK), 84 to 106 (AGPT…DNPP), and 145 to 209 (PYSN…SAPG). Acidic residues predominate over residues 12–22 (PIPEEGTEADG). The segment covering 145–157 (PYSNIDFDSSGLP) has biased composition (polar residues). 4 consecutive Fibronectin type-III domains span residues 207-302 (APGV…IPIS), 315-411 (APGR…IRPA), 428-518 (PPGQ…LRPT), and 530-624 (ILEA…IEPS). Positions 412-433 (APQRHVPARKVSESVQPPGQPQ) are disordered. A disordered region spans residues 662–685 (MVRESPPLPERDDSPPPLRRANNN). 5 ARM repeats span residues 733 to 775 (GGIP…AVME), 777 to 820 (DGVR…ESAT), 874 to 922 (NLIE…YDPA), 969 to 1012 (HVVK…RAAV), and 1016 to 1058 (KGLP…KYAL). The segment at 920–960 (DPAAAHSSSSKNMKHVASPKPEKKKKDKEKKKDKNPKNIVT) is disordered. Residues 1159 to 1254 (GTARRGDSST…GGGNIDDSWV (96 aa)) are disordered. A compositionally biased stretch (polar residues) spans 1166–1176 (SSTLARPISSQ). The segment covering 1177–1187 (GRERPSMHQLD) has biased composition (basic and acidic residues).

The protein belongs to the beta-catenin family. As to quaternary structure, associated with the catenin-cadherin complex consisting of hmr-1, hmp-1 and hmp-2. Interacts with hmr-1. Interacts with picc-1. In terms of tissue distribution, epidermal cells.

Its subcellular location is the cell junction. The protein localises to the adherens junction. The protein resides in the nucleus. May act as a positive modulator of hmr-1 function during epidermal morphogenesis. Required for proper localization of other junctional components, such as pac-1. The polypeptide is Juxtamembrane domain-associated catenin (jac-1) (Caenorhabditis elegans).